Here is a 327-residue protein sequence, read N- to C-terminus: Eukaryotic translation initiation factor 3 subunit I (327 aa).

WD repeat units lie at residues 8-49 (GHER…GSYD), 51-89 (HNGA…CIYT), 188-227 (VHRY…KLKQ), 229-268 (KSER…GHFE), and 285-324 (GHFG…LGFT).

Belongs to the eIF-3 subunit I family. As to quaternary structure, component of the eukaryotic translation initiation factor 3 (eIF-3) complex.

The protein localises to the cytoplasm. Its function is as follows. Component of the eukaryotic translation initiation factor 3 (eIF-3) complex, which is involved in protein synthesis of a specialized repertoire of mRNAs and, together with other initiation factors, stimulates binding of mRNA and methionyl-tRNAi to the 40S ribosome. The eIF-3 complex specifically targets and initiates translation of a subset of mRNAs involved in cell proliferation. The sequence is that of Eukaryotic translation initiation factor 3 subunit I from Caenorhabditis briggsae.